The chain runs to 338 residues: D-erythrose-4-phosphate dehydrogenase (338 aa).

11-12 (RI) contributes to the NAD(+) binding site. Residues 153–155 (SCT), R199, 212–213 (TK), and R235 contribute to the substrate site. The active-site Nucleophile is the C154. N317 serves as a coordination point for NAD(+).

This sequence belongs to the glyceraldehyde-3-phosphate dehydrogenase family. Epd subfamily. As to quaternary structure, homotetramer.

The protein localises to the cytoplasm. It catalyses the reaction D-erythrose 4-phosphate + NAD(+) + H2O = 4-phospho-D-erythronate + NADH + 2 H(+). It functions in the pathway cofactor biosynthesis; pyridoxine 5'-phosphate biosynthesis; pyridoxine 5'-phosphate from D-erythrose 4-phosphate: step 1/5. Its function is as follows. Catalyzes the NAD-dependent conversion of D-erythrose 4-phosphate to 4-phosphoerythronate. This Shewanella putrefaciens (strain CN-32 / ATCC BAA-453) protein is D-erythrose-4-phosphate dehydrogenase.